Consider the following 124-residue polypeptide: LOB domain-containing protein 9 (124 aa).

The region spanning Ala11–Ile113 is the LOB domain.

The protein belongs to the LOB domain-containing protein family.

The protein is LOB domain-containing protein 9 (LBD9) of Arabidopsis thaliana (Mouse-ear cress).